A 261-amino-acid polypeptide reads, in one-letter code: uncharacterized protein (261 aa).

Residues 15 to 75 form the HTH tetR-type domain; the sequence is SINPEDIISG…AMTDRALSKY (61 aa). The segment at residues 38–57 is a DNA-binding region (H-T-H motif); it reads SMPLLGKHLGVGVTSIYWYF. Positions 234 to 261 are disordered; sequence AAGEVAVRRPTATADAPTPGARAKAVAR. Positions 241 to 261 are enriched in low complexity; it reads RRPTATADAPTPGARAKAVAR.

This is an uncharacterized protein from Mycobacterium bovis (strain ATCC BAA-935 / AF2122/97).